Here is an 812-residue protein sequence, read N- to C-terminus: MGNSQTKEFRPPLSSSNRRSHQWGSSSSHGRSPYSDRHHAESSRSRGSRPDLSILGIGGSSERDVATLEHRRETKQEREARRLEKERAARVKERERSMREEHVDGGYLVTQGVYVGAEDFNKVVTRQLMIERRLAPFWRGLNDFSESWTEHQLMAAARGLPIPPPDEIPPELEYKNPPKLTEDGKESSIQHLMVPITSRSQSYGSEASQSSTPAHSLPTPVSPIASGTSTSPLFRSRAKTLASLTTSKLGSQIDSTPKEIHLPEDPFVNGQPIEAYLYKDATECPICFLYYPPYLNRTRCCDQPICSECFVQIKRPDPHPPEHGEAEPNATAAEGDRQDNQDCQLVSEPAACPFCVQPEFGVTYTPPPFRRGLVYATDPTLRPNFASPVSSTSSLASANAPPGTGRRRATSLSANDPTVITTDRVRPDWAQKLANARAHAARRSAAATALHTAAYLMNSTASGNESRNFGLGRRGVMRRTGQSETPSASSRSGSPALQALAFLTDRRTPGHETDSAEEGAGNLAPPRNSSRRNRIDDLEEMMMMEAIRLSLASEEERRKKAEKEARKEAKRREKESKKAEKAARKHGFYSNNASSSALDVPSDARLGRVTSSSSSITGEDASPSKGKEVDRASPSATAASSQSSTEIASDSMTINPHPNVVEHGSSAQSLMAQPSAREPPKPSHLRQVSSASSSFSSLVESTGEDHSGAYDGNASSTEPLFNFRSLAAVIGDEDKGDETAEHVEDTSSKPSAEGSASSAAPVADEMLGQSTAPADPIAVGTVAEERDCLMPKELETQSVEITSATRNTEATT.

Disordered stretches follow at residues 1–97, 160–187, 200–232, 317–339, 385–412, 508–532, 554–718, and 732–812; these read MGNS…RERS, LPIP…GKES, SQSY…STSP, DPHP…DRQD, FASP…ATSL, TPGH…SSRR, EEER…SSTE, and DEDK…EATT. Positions 14–33 are enriched in low complexity; sequence SSSNRRSHQWGSSSSHGRSP. Basic and acidic residues-rich tracts occupy residues 34-44, 61-97, and 172-187; these read YSDRHHAESSR, SERD…RERS, and LEYK…GKES. Positions 200 to 211 are enriched in low complexity; the sequence is SQSYGSEASQSS. A compositionally biased stretch (basic and acidic residues) spans 317-326; that stretch reads DPHPPEHGEA. The span at 386 to 402 shows a compositional bias: low complexity; the sequence is ASPVSSTSSLASANAPP. Over residues 554-582 the composition is skewed to basic and acidic residues; sequence EEERRKKAEKEARKEAKRREKESKKAEKA. 2 stretches are compositionally biased toward low complexity: residues 632–651 and 689–701; these read ASPS…ASDS and SSAS…LVES. Over residues 737–747 the composition is skewed to basic and acidic residues; it reads DETAEHVEDTS. Positions 748 to 763 are enriched in low complexity; it reads SKPSAEGSASSAAPVA. A compositionally biased stretch (basic and acidic residues) spans 783–795; that stretch reads AEERDCLMPKELE. Residues 796 to 812 are compositionally biased toward polar residues; it reads TQSVEITSATRNTEATT.

This sequence belongs to the SIP5 family.

The protein resides in the cytoplasm. Functionally, may negatively regulate the snf1 kinase. The sequence is that of Protein sip5 (sip5) from Neosartorya fischeri (strain ATCC 1020 / DSM 3700 / CBS 544.65 / FGSC A1164 / JCM 1740 / NRRL 181 / WB 181) (Aspergillus fischerianus).